We begin with the raw amino-acid sequence, 354 residues long: Glycine betaine/proline betaine transport system permease protein ProW (354 aa).

A disordered region spans residues 1 to 41 (MADQNNPWDTTPAADSAAQSADAWGTPTTAPTDGGGADWLT). Over 1 to 99 (MADQNNPWDT…VDYILNGFQQ (99 aa)) the chain is Cytoplasmic. Residues 13-32 (AADSAAQSADAWGTPTTAPT) are compositionally biased toward low complexity. Residues 100–120 (LLLGMPAPVAIIVFALIAWQI) traverse the membrane as a helical segment. Residue Ser-121 is a topological domain, periplasmic. A helical membrane pass occupies residues 122–142 (GVGMGVATLVSLIAIGAIGAW). Residues 143 to 148 (SQAMVT) lie on the Cytoplasmic side of the membrane. The ABC transmembrane type-1 domain occupies 145–324 (AMVTLALVLT…ILAIILDRLT (180 aa)). The chain crosses the membrane as a helical span at residues 149–169 (LALVLTALLFCIVIGLPLGIW). The Periplasmic portion of the chain corresponds to 170-198 (LARSPRAAKIIRPLLDAMQTTPAFVYLVP). The helical transmembrane segment at 199–219 (IVMLFGIGNVPGVVVTIIFAL) threads the bilayer. The Cytoplasmic portion of the chain corresponds to 220 to 270 (PPIIRLTILGINQVPADLIEASRSFGASPRQMLFKVQLPLAMPTIMAGVNQ). A helical transmembrane segment spans residues 271–291 (TLMLALSMVVIASMIAVGGLG). At 292–300 (QMVLRGIGR) the chain is on the periplasmic side. The chain crosses the membrane as a helical span at residues 301 to 321 (LDMGLATVGGVGIVILAIILD). Residues 322 to 354 (RLTQAVGRDSRSRGNRRWYTTGPVGLLTRPFIK) are Cytoplasmic-facing.

This sequence belongs to the binding-protein-dependent transport system permease family. CysTW subfamily. The complex is composed of two ATP-binding proteins (ProV), two transmembrane proteins (ProW) and a solute-binding protein (ProX).

Its subcellular location is the cell inner membrane. In terms of biological role, part of the ProU ABC transporter complex involved in glycine betaine and proline betaine uptake. Probably responsible for the translocation of the substrate across the membrane. The protein is Glycine betaine/proline betaine transport system permease protein ProW of Escherichia coli (strain K12).